The primary structure comprises 85 residues: Beta-insect depressant toxin Lqh-dprIT3d (85 aa).

The signal sequence occupies residues 1–21 (MKLLLLLTISASMLIEGLVNA). The 61-residue stretch at 22–82 (DGYIRGGDGC…EWDYETNTCG (61 aa)) folds into the LCN-type CS-alpha/beta domain. Cystine bridges form between Cys31/Cys81, Cys35/Cys56, Cys42/Cys63, and Cys46/Cys65. The residue at position 82 (Gly82) is a Glycine amide.

This sequence belongs to the long (4 C-C) scorpion toxin superfamily. Sodium channel inhibitor family. Beta subfamily. In terms of tissue distribution, expressed by the venom gland.

It is found in the secreted. In terms of biological role, depressant insect beta-toxins cause a transient contraction paralysis followed by a slow flaccid paralysis. They bind voltage-independently at site-4 of sodium channels (Nav) and block action potentials, primarily by depolarizing the axonal membrane and suppressing the sodium current. This depressant toxin is active only on insects. It is found in a relatively small amount in the venom, and its activity on insects is 10-fold higher compared to other known depressant toxins. The protein is Beta-insect depressant toxin Lqh-dprIT3d of Leiurus hebraeus (Hebrew deathstalker scorpion).